Consider the following 581-residue polypeptide: Protein FAM83D (581 aa).

The DUF1669 stretch occupies residues 1 to 297 (MALRYDGLDE…LYAQSKPISS (297 aa)). Positions 75-101 (PGEEGAAAGAEDSFGSSHDCSSGTYFP) are disordered. Residues 88-98 (FGSSHDCSSGT) are compositionally biased toward polar residues. The residue at position 296 (S296) is a Phosphoserine. The tract at residues 338–581 (TPRKVELGGE…REIMLYPSYQ (244 aa)) is required for interaction with KIF22 and function in chromosome congression. 2 disordered regions span residues 366 to 401 (EDYF…MSDV) and 426 to 503 (QTVV…GPPK). Basic and acidic residues predominate over residues 369-382 (FSSRKDRLEGRRVT). Residues 426–438 (QTVVPTTSATTQT) show a composition bias toward low complexity. A Phosphoserine modification is found at S456. Residues 462–488 (SVSRSSSLRSSSSLSSQGSVASSIGSQ) show a composition bias toward low complexity. Phosphothreonine is present on T507.

The protein belongs to the FAM83 family. Interacts with FBXW7; promotes FBXW7 degradation. May interact with RAF1. Interacts with KIF22; recruits KIF22 to mitotic spindle microtubules. Interacts (via C-terminus) with DYNLL1. Interacts with HMMR. Directly interacts (via DUF1669) with CSNK1A1 and CSNK1A1L. Phosphorylated during mitosis.

Its subcellular location is the cytoplasm. It localises to the cytoskeleton. It is found in the spindle. The protein localises to the spindle pole. In terms of biological role, through the degradation of FBXW7, may act indirectly on the expression and downstream signaling of MTOR, JUN and MYC. May play also a role in cell proliferation through activation of the ERK1/ERK2 signaling cascade. May also be important for proper chromosome congression and alignment during mitosis through its interaction with KIF22. This chain is Protein FAM83D, found in Bos taurus (Bovine).